The following is a 166-amino-acid chain: Cofilin-1 (166 aa).

Residue Ala2 is modified to N-acetylalanine. A phosphoserine mark is found at Ser3 and Ser8. The 150-residue stretch at 4-153 (GVAVSDGVIK…KDRCTLAEKL (150 aa)) folds into the ADF-H domain. At Lys13 the chain carries N6-acetyllysine. Phosphothreonine is present on Thr25. The Nuclear localization signal signature appears at 30-34 (KKRKK). Phosphoserine is present on Ser41. At Tyr68 the chain carries Phosphotyrosine. Residue Lys73 is modified to N6-acetyllysine. Lys132 participates in a covalent cross-link: Glycyl lysine isopeptide (Lys-Gly) (interchain with G-Cter in SUMO2). The residue at position 140 (Tyr140) is a Phosphotyrosine. Lys144 is subject to N6-acetyllysine. Ser156 is subject to Phosphoserine.

This sequence belongs to the actin-binding proteins ADF family. In terms of assembly, can bind G- and F-actin in a 1:1 ratio of cofilin to actin. It is a major component of intranuclear and cytoplasmic actin rods. Interacts with the subcortical maternal complex (SCMC) via interaction with TLE6 and NLRP5. Interacts with C9orf72. In terms of processing, inactivated by phosphorylation on Ser-3. Phosphorylated on Ser-3 in resting cells. Dephosphorylated by PDXP/chronophin; this restores its activity in promoting actin filament depolymerization. The phosphorylation of Ser-24 may prevent recognition of the nuclear localization signal. Phosphorylated via a ARRB1-RAC1-LIMK1-PAK1 cascade upon active ligand stimulation of atypical chemokine receptor ACKR2.

The protein resides in the nucleus matrix. It is found in the cytoplasm. It localises to the cytoskeleton. The protein localises to the cell projection. Its subcellular location is the ruffle membrane. The protein resides in the lamellipodium membrane. It is found in the lamellipodium. It localises to the growth cone. The protein localises to the axon. Its function is as follows. Binds to F-actin and exhibits pH-sensitive F-actin depolymerizing activity. Important for normal progress through mitosis and normal cytokinesis. In conjunction with the subcortical maternal complex (SCMC), plays an essential role for zygotes to progress beyond the first embryonic cell divisions via regulation of actin dynamics. Required for the centralization of the mitotic spindle and symmetric division of zygotes. Plays a role in the regulation of cell morphology and cytoskeletal organization in epithelial cells. Required for the up-regulation of atypical chemokine receptor ACKR2 from endosomal compartment to cell membrane, increasing its efficiency in chemokine uptake and degradation. Required for neural tube morphogenesis and neural crest cell migration. This Rattus norvegicus (Rat) protein is Cofilin-1 (Cfl1).